Here is a 236-residue protein sequence, read N- to C-terminus: 2,3,4,5-tetrahydropyridine-2,6-dicarboxylate N-acetyltransferase (236 aa).

Belongs to the transferase hexapeptide repeat family. DapH subfamily.

It catalyses the reaction (S)-2,3,4,5-tetrahydrodipicolinate + acetyl-CoA + H2O = L-2-acetamido-6-oxoheptanedioate + CoA. It participates in amino-acid biosynthesis; L-lysine biosynthesis via DAP pathway; LL-2,6-diaminopimelate from (S)-tetrahydrodipicolinate (acetylase route): step 1/3. Its function is as follows. Catalyzes the transfer of an acetyl group from acetyl-CoA to tetrahydrodipicolinate. This chain is 2,3,4,5-tetrahydropyridine-2,6-dicarboxylate N-acetyltransferase, found in Limosilactobacillus reuteri (strain DSM 20016) (Lactobacillus reuteri).